We begin with the raw amino-acid sequence, 466 residues long: MASPAQPAATMAAFARMVKGQVRSYSAPVDMAIPASKRKFIPSSGSYPKGFVVSGTHVGVKASNTKFPDLALISSETPCSAAAVFTTNKFQAAPVQVSRDIIKTRQGQGIRSVVINSGCANAVTGKGGLEDAVSMGKKVDECDGLNEPSTLVMSTGVIGQRLPISKILKKVPVAHANLSSTHDAWLTTARAICTTDTFPKLLSRTFTLPSSPGRTYSLAGMTKGAGMIHPNMATLLGVLCTDAPIEPSALQSLLKHSVNRSFNSISVDGDTSTNDTIAILANGAAGGAPISSSSSDDYAAMQDILTSFAQSLSQLVVRDGEGATKFVTVRVQNSPDYESGRLIASTIARSPLVKTALYGKDANWGRILCAIGYTQGVAPGTVVPEHTSVSFKPVDGSPVLNLLVNGEPEQVDEERASVILQEEDLEIVVDLGGGEKGEQGLGGEEAVYWFCDFSHEYVTINGDYRT.

Substrate-binding residues include Thr-194, Lys-223, Thr-234, Glu-321, Asn-461, and Thr-466. Thr-234 functions as the Nucleophile in the catalytic mechanism.

It belongs to the ArgJ family. As to quaternary structure, heterodimer of an alpha and a beta chain. In terms of processing, the alpha and beta chains are autoproteolytically processed from a single precursor protein within the mitochondrion.

The protein resides in the mitochondrion matrix. It catalyses the reaction N(2)-acetyl-L-ornithine + L-glutamate = N-acetyl-L-glutamate + L-ornithine. The enzyme catalyses L-glutamate + acetyl-CoA = N-acetyl-L-glutamate + CoA + H(+). Its pathway is amino-acid biosynthesis; L-arginine biosynthesis; L-ornithine and N-acetyl-L-glutamate from L-glutamate and N(2)-acetyl-L-ornithine (cyclic): step 1/1. It participates in amino-acid biosynthesis; L-arginine biosynthesis; N(2)-acetyl-L-ornithine from L-glutamate: step 1/4. In terms of biological role, catalyzes two activities which are involved in the cyclic version of arginine biosynthesis: the synthesis of acetylglutamate from glutamate and acetyl-CoA, and of ornithine by transacetylation between acetylornithine and glutamate. The sequence is that of Arginine biosynthesis bifunctional protein ArgJ, mitochondrial from Aspergillus flavus (strain ATCC 200026 / FGSC A1120 / IAM 13836 / NRRL 3357 / JCM 12722 / SRRC 167).